Reading from the N-terminus, the 1627-residue chain is Formin-like protein 5 (1627 aa).

The Phosphatase tensin-type domain occupies 5–194; the sequence is RKFFLKKTPD…HYITRQGSGP (190 aa). Cys127 (phosphocysteine intermediate) is an active-site residue. The 138-residue stretch at 200 to 337 folds into the C2 tensin-type domain; it reads SRPLILDSIV…FRAEVVFSDP (138 aa). Disordered regions lie at residues 370-413, 680-787, 801-1181, 1241-1261, and 1571-1627; these read EAEE…LEKH, TKRE…YDSS, KFNV…RGVV, AAVPKPNDSSKSDSRRKSLGS, and KQAE…KDVG. 4 stretches are compositionally biased toward basic and acidic residues: residues 402–413, 681–691, 700–717, and 726–742; these read VSREDSGSLEKH, KREESGGRRDV, IEARAKSPRISSDRRQIP, and MPVDHAPEAVLLEEKLG. 6 stretches are compositionally biased toward pro residues: residues 824-835, 852-870, 877-886, 897-908, 931-965, and 974-1168; these read APPPPPPPPPPY, QPPPPPPPPPLPPPPPPPA, IPPPPPPPPL, VPPPPPPPPPPR, ISPPPPPPPPPLKPSSGAPCPPPPPPPPPPPPPSA, and APPP…PPGG. One can recognise an FH2 domain in the interval 1188-1588; sequence FGAAAARKST…RAEKEAEAEK (401 aa). Basic and acidic residues-rich tracts occupy residues 1248-1261 and 1571-1590; these read DSSKSDSRRKSLGS and KQAELDKKRAEKEAEAEKSK. A compositionally biased stretch (polar residues) spans 1600 to 1611; that stretch reads KPSNPSRQVKQT. The span at 1612–1627 shows a compositional bias: basic and acidic residues; that stretch reads PDTKTRAASRRGKDVG.

Belongs to the formin-like family. Class-II subfamily.

This Oryza sativa subsp. japonica (Rice) protein is Formin-like protein 5 (FH5).